Reading from the N-terminus, the 40-residue chain is Photosystem II reaction center protein J (40 aa).

Residues 10–30 (LWLVGTVAGTLVIGLLGVFFY) form a helical membrane-spanning segment.

This sequence belongs to the PsbJ family. In terms of assembly, PSII is composed of 1 copy each of membrane proteins PsbA, PsbB, PsbC, PsbD, PsbE, PsbF, PsbH, PsbI, PsbJ, PsbK, PsbL, PsbM, PsbT, PsbX, PsbY, PsbZ, Psb30/Ycf12, at least 3 peripheral proteins of the oxygen-evolving complex and a large number of cofactors. It forms dimeric complexes.

It is found in the plastid. Its subcellular location is the chloroplast thylakoid membrane. Its function is as follows. One of the components of the core complex of photosystem II (PSII). PSII is a light-driven water:plastoquinone oxidoreductase that uses light energy to abstract electrons from H(2)O, generating O(2) and a proton gradient subsequently used for ATP formation. It consists of a core antenna complex that captures photons, and an electron transfer chain that converts photonic excitation into a charge separation. This chain is Photosystem II reaction center protein J, found in Adiantum capillus-veneris (Maidenhair fern).